The following is a 377-amino-acid chain: Geranylgeranyl transferase type-1 subunit beta (377 aa).

4 PFTB repeats span residues 144–186, 193–234, 245–284, and 291–333; these read KEAC…YMLN, MKKA…CLMG, LNRIKRWCIMRQQNGYHGRPNKPVDTCYSFWVGATLKLLK, and FEKN…SLME. Residues 219–221 and 263–266 contribute to the geranylgeranyl diphosphate site; these read HGG and RPNK. Zn(2+) contacts are provided by Asp-269 and Cys-271. 272–275 lines the geranylgeranyl diphosphate pocket; sequence YSFW. His-321 is a binding site for Zn(2+).

The protein belongs to the protein prenyltransferase subunit beta family. In terms of assembly, heterodimer of FNTA and PGGT1B. PGGT1B mediates interaction with substrate peptides. It depends on Zn(2+) as a cofactor. Mg(2+) is required as a cofactor.

The catalysed reaction is geranylgeranyl diphosphate + L-cysteinyl-[protein] = S-geranylgeranyl-L-cysteinyl-[protein] + diphosphate. Catalyzes the transfer of a geranyl-geranyl moiety from geranyl-geranyl pyrophosphate to a cysteine at the fourth position from the C-terminus of proteins having the C-terminal sequence Cys-aliphatic-aliphatic-X. Known substrates include RAC1, RAC2, RAP1A and RAP1B. This Homo sapiens (Human) protein is Geranylgeranyl transferase type-1 subunit beta (PGGT1B).